A 312-amino-acid polypeptide reads, in one-letter code: Envelope glycoprotein K (312 aa).

An N-terminal signal peptide occupies residues 1–20 (MLLGGRPLHLLVLGVMGAYA). At 21–91 (GLGAYYATVA…VVYARRDCRA (71 aa)) the chain is on the extracellular side. Residues asparagine 58 and asparagine 67 are each glycosylated (N-linked (GlcNAc...) asparagine; by host). A helical transmembrane segment spans residues 92 to 112 (YLWDVHFRLAAVAWLLYAAFV). Over 113 to 187 (YARQERRMFG…DPITLAHRHP (75 aa)) the chain is Cytoplasmic. A helical membrane pass occupies residues 188-208 (TLIALILLELGLRLGARMALF). Residues 209 to 227 (TTLGVTRAPCALVFPLYAR) lie on the Extracellular side of the membrane. A helical transmembrane segment spans residues 228-248 (ALVWIFVLAVGALELLAATLP). Over 249–280 (HIARVSGATATPARSDGGRAALGVCGACCSTV) the chain is Cytoplasmic. A helical membrane pass occupies residues 281 to 301 (LAGIFAKALYLCLLVGGVLLF). The Extracellular segment spans residues 302–312 (LHYERHITIFG).

It belongs to the alphaherpesvirinae glycoprotein K family. In terms of assembly, interacts (via UL20 interaction region) with protein UL20 homolog (via N-terminus); this interaction probably plays a role in the coordinate transport of protein UL20 homolog and gK to the trans-Golgi network (TGN), and is required for the cell surface expression of gK. N-glycosylated.

The protein localises to the host cell membrane. Its subcellular location is the host endosome membrane. It localises to the host Golgi apparatus membrane. Glycoprotein that probably modulates membrane fusion events during secondary envelopment of cytoplasmic capsids that bud into specific trans-Golgi network (TGN)-derived membranes. In Sus scrofa (Pig), this protein is Envelope glycoprotein K (gK).